The chain runs to 215 residues: MLQVYLVRHGETQWNAERRIQGQSDSPLTAKGEQQAMQVATRAKELGITHIISSDLGRTRRTAEIIAQACGCDIIFDSRLRELNMGVLETRNIDSLTEEEENWRRQLVNGTVDGRIPEGESMQELSDRVNAALESCRDLPQGSRPLLVSHGIALGCLVSTILGLPAWAERRLRLRNCSISRVDYQESLWLASGWVVETAGDISHLDAPALDELQR.

Substrate is bound by residues 8–15 (RHGETQWN), 21–22 (QG), Arg58, Arg60, 82–85 (ELNM), 104–105 (RR), and 151–152 (GI). His9 serves as the catalytic Tele-phosphohistidine intermediate. The active-site Proton donor/acceptor is the Glu82.

The protein belongs to the phosphoglycerate mutase family. GpmB subfamily.

The enzyme catalyses (2R)-2-phosphoglycerate = (2R)-3-phosphoglycerate. Its pathway is carbohydrate degradation; glycolysis; pyruvate from D-glyceraldehyde 3-phosphate: step 3/5. The polypeptide is Probable phosphoglycerate mutase GpmB (Escherichia coli O1:K1 / APEC).